A 342-amino-acid chain; its full sequence is Ribosomal RNA small subunit methyltransferase H (342 aa).

Residues 62 to 64 (GGH), Asp-82, Phe-108, Asp-129, and Gln-136 each bind S-adenosyl-L-methionine. The disordered stretch occupies residues 280–319 (RHSKGQYPEDENLPMPPKRPRYFSKPKRVGPSKAEISHNP). Basic residues predominate over residues 297–309 (KRPRYFSKPKRVG).

The protein belongs to the methyltransferase superfamily. RsmH family.

It is found in the cytoplasm. The enzyme catalyses cytidine(1402) in 16S rRNA + S-adenosyl-L-methionine = N(4)-methylcytidine(1402) in 16S rRNA + S-adenosyl-L-homocysteine + H(+). Specifically methylates the N4 position of cytidine in position 1402 (C1402) of 16S rRNA. This chain is Ribosomal RNA small subunit methyltransferase H, found in Psychrobacter cryohalolentis (strain ATCC BAA-1226 / DSM 17306 / VKM B-2378 / K5).